Here is a 1187-residue protein sequence, read N- to C-terminus: Non-receptor tyrosine-protein kinase TYK2 (1187 aa).

In terms of domain architecture, FERM spans 26 to 431; it reads GGLKVLLHWA…GYFRLTADSS (406 aa). Tyrosine 292 bears the Phosphotyrosine mark. The tract at residues 335 to 366 is disordered; the sequence is KEEGSSGSSGRNPQASLFGKKAKAHKAVGQPA. Residues 339-349 show a composition bias toward polar residues; sequence SSGSSGRNPQA. The SH2; atypical domain maps to 450–529; that stretch reads GIHGPLLEPF…GRSFPSVREL (80 aa). Phosphoserine occurs at positions 499 and 525. The region spanning 589–875 is the Protein kinase 1 domain; the sequence is ITQLSHLGQG…LTRLQPHNLA (287 aa). Tyrosine 604 carries the phosphotyrosine modification. Residues 610–629 are disordered; it reads VEGSGDPEEGKMDDEDPLVP. Residues 614–626 show a composition bias toward acidic residues; that stretch reads GDPEEGKMDDEDP. Serine 884 bears the Phosphoserine mark. Positions 897–1176 constitute a Protein kinase 2 domain; that stretch reads LKKIRDLGEG…PILKTVHEKY (280 aa). ATP is bound by residues 903–911 and lysine 930; that span reads LGEGHFGKV. The Proton acceptor role is filled by aspartate 1023. The residue at position 1054 (tyrosine 1054) is a Phosphotyrosine; by autocatalysis. Position 1055 is a phosphotyrosine (tyrosine 1055).

It belongs to the protein kinase superfamily. Tyr protein kinase family. JAK subfamily. As to quaternary structure, interacts (via FERM domain) with JAKMIP1. Interacts with PIK3R1; this interaction is important for cell migration. Interacts with MPL/TPOR. (Microbial infection) Interacts with Epstein-Barr virus protein LMP1; this interaction inhibits TYK2-mediated interferon signaling. In terms of assembly, (Microbial infection) Interacts with papillomavirus-18 protein E6; this interaction impairs JAK-STAT activation by interferon-alpha. As to quaternary structure, (Microbial infection) Interacts with Epstein-Barr virus (EBV) tegument protein BGLF2; this interaction participates in the inhibition of type I IFN signaling by the virus. Phosphorylated. Phosphorylation by JAK1 at Tyr-1054 and Tyr-1055 induces kinase activation. As to expression, observed in all cell lines analyzed. Expressed in a variety of lymphoid and non-lymphoid cell lines.

It carries out the reaction L-tyrosyl-[protein] + ATP = O-phospho-L-tyrosyl-[protein] + ADP + H(+). With respect to regulation, the protein kinase 1 domain (also termed pseudokinase domain) mediates autoinhibition of the TYK2 kinase domain. Tyrosine kinase of the non-receptor type involved in numerous cytokines and interferons signaling, which regulates cell growth, development, cell migration, innate and adaptive immunity. Plays both structural and catalytic roles in numerous interleukins and interferons (IFN-alpha/beta) signaling. Associates with heterodimeric cytokine receptor complexes and activates STAT family members including STAT1, STAT3, STAT4 or STAT6. The heterodimeric cytokine receptor complexes are composed of (1) a TYK2-associated receptor chain (IFNAR1, IL12RB1, IL10RB or IL13RA1), and (2) a second receptor chain associated either with JAK1 or JAK2. In response to cytokine-binding to receptors, phosphorylates and activates receptors (IFNAR1, IL12RB1, IL10RB or IL13RA1), creating docking sites for STAT members. In turn, recruited STATs are phosphorylated by TYK2 (or JAK1/JAK2 on the second receptor chain), form homo- and heterodimers, translocate to the nucleus, and regulate cytokine/growth factor responsive genes. Negatively regulates STAT3 activity by promototing phosphorylation at a specific tyrosine that differs from the site used for signaling. The sequence is that of Non-receptor tyrosine-protein kinase TYK2 (TYK2) from Homo sapiens (Human).